We begin with the raw amino-acid sequence, 121 residues long: Flagellar protein FliT (121 aa).

A required for homodimerization region spans residues 1 to 50 (MNHAPHLYFAWQQLVDKSQLMLRLATEEQWDELIASEMAYVNAVQEIAHL). Residues 60 to 98 (MQEQLRPMLRLILDNESKVKQLLQIRMDELAKLVGQSSV) are fliD binding.

This sequence belongs to the FliT family. Homodimer. Interacts with FliD and FlhC.

It localises to the cytoplasm. The protein resides in the cytosol. Its function is as follows. Dual-function protein that regulates the transcription of class 2 flagellar operons and that also acts as an export chaperone for the filament-capping protein FliD. As a transcriptional regulator, acts as an anti-FlhDC factor; it directly binds FlhC, thus inhibiting the binding of the FlhC/FlhD complex to class 2 promoters, resulting in decreased expression of class 2 flagellar operons. As a chaperone, effects FliD transition to the membrane by preventing its premature polymerization, and by directing it to the export apparatus. The sequence is that of Flagellar protein FliT from Shigella sonnei (strain Ss046).